The sequence spans 510 residues: Light-independent protochlorophyllide reductase subunit B (510 aa).

Aspartate 36 contacts [4Fe-4S] cluster. The active-site Proton donor is aspartate 297. Position 432 to 433 (glycine 432 to methionine 433) interacts with substrate.

It belongs to the ChlB/BchB/BchZ family. In terms of assembly, protochlorophyllide reductase is composed of three subunits; ChlL, ChlN and ChlB. Forms a heterotetramer of two ChlB and two ChlN subunits. Requires [4Fe-4S] cluster as cofactor.

The protein localises to the plastid. Its subcellular location is the chloroplast. It carries out the reaction chlorophyllide a + oxidized 2[4Fe-4S]-[ferredoxin] + 2 ADP + 2 phosphate = protochlorophyllide a + reduced 2[4Fe-4S]-[ferredoxin] + 2 ATP + 2 H2O. It functions in the pathway porphyrin-containing compound metabolism; chlorophyll biosynthesis (light-independent). Functionally, component of the dark-operative protochlorophyllide reductase (DPOR) that uses Mg-ATP and reduced ferredoxin to reduce ring D of protochlorophyllide (Pchlide) to form chlorophyllide a (Chlide). This reaction is light-independent. The NB-protein (ChlN-ChlB) is the catalytic component of the complex. The polypeptide is Light-independent protochlorophyllide reductase subunit B (Pinus thunbergii (Japanese black pine)).